Consider the following 821-residue polypeptide: Xylosyltransferase 1 (821 aa).

The segment at 1–121 is disordered; the sequence is YFSHRPKEKV…PETKSDQVPK (121 aa). Residues 1–821 lie on the Lumenal side of the membrane; sequence YFSHRPKEKV…GAVKPDGRLR (821 aa). A compositionally biased stretch (basic and acidic residues) spans 9–25; the sequence is KVRTDSNNENSVPKDFE. Polar residues predominate over residues 27–36; the sequence is VDNSNFAPRT. 2 stretches are compositionally biased toward basic and acidic residues: residues 41-58 and 76-87; these read HQPE…ERLQ and GPKEVLPPREKA. Asn90 carries an N-linked (GlcNAc...) asparagine glycan. Disulfide bonds link Cys122/Cys150, Cys166/Cys407, Cys426/Cys439, and Cys428/Cys437. Residues Val198, Asp226, and 255-257 contribute to the UDP-alpha-D-xylose site; that span reads TIW. Asn286 is a glycosylation site (N-linked (GlcNAc...) asparagine). 359-360 contributes to the UDP-alpha-D-xylose binding site; that stretch reads DW. UDP-alpha-D-xylose contacts are provided by residues Ser440 and 463 to 464; that span reads RK. 2 disulfides stabilise this stretch: Cys540–Cys789 and Cys782–Cys795. Residue Asn642 is glycosylated (N-linked (GlcNAc...) asparagine). The segment at 801–821 is disordered; sequence SSFSPDPKSELGAVKPDGRLR.

It belongs to the glycosyltransferase 14 family. XylT subfamily. Monomer. The cofactor is a divalent metal cation. Post-translationally, contains 7 disulfide bonds. In terms of processing, N-glycosylated.

The protein localises to the golgi apparatus membrane. It carries out the reaction UDP-alpha-D-xylose + L-seryl-[protein] = 3-O-(beta-D-xylosyl)-L-seryl-[protein] + UDP + H(+). Its pathway is glycan metabolism; chondroitin sulfate biosynthesis. It participates in glycan metabolism; heparan sulfate biosynthesis. In terms of biological role, catalyzes the first step in the biosynthesis of chondroitin sulfate and dermatan sulfate proteoglycans, such as DCN. Transfers D-xylose from UDP-D-xylose to specific serine residues of the core protein. Required for normal maturation of chondrocytes during bone development, normal onset of ossification and normal embryonic and postnatal skeleton development, especially of the long bones. In Rattus norvegicus (Rat), this protein is Xylosyltransferase 1 (Xylt1).